Here is a 149-residue protein sequence, read N- to C-terminus: 3-dehydroquinate dehydratase 2 (149 aa).

Residue Y24 is the Proton acceptor of the active site. Residues N75, H81, and D88 each coordinate substrate. H101 functions as the Proton donor in the catalytic mechanism. Residues 102–103 and R112 contribute to the substrate site; that span reads LS.

It belongs to the type-II 3-dehydroquinase family. In terms of assembly, homododecamer.

It carries out the reaction 3-dehydroquinate = 3-dehydroshikimate + H2O. It participates in metabolic intermediate biosynthesis; chorismate biosynthesis; chorismate from D-erythrose 4-phosphate and phosphoenolpyruvate: step 3/7. In terms of biological role, catalyzes a trans-dehydration via an enolate intermediate. The protein is 3-dehydroquinate dehydratase 2 (aroQ2) of Pseudomonas putida (strain ATCC 47054 / DSM 6125 / CFBP 8728 / NCIMB 11950 / KT2440).